Here is a 249-residue protein sequence, read N- to C-terminus: uncharacterized protein (249 aa).

Position 11–34 (11–34 (IFGGRSQIGGELARRLAAGATMVL)) interacts with NADP(+). Position 142 (Ser142) interacts with substrate. Tyr155 functions as the Proton acceptor in the catalytic mechanism.

Belongs to the short-chain dehydrogenases/reductases (SDR) family.

This is an uncharacterized protein from Mycobacterium tuberculosis (strain ATCC 25618 / H37Rv).